The sequence spans 360 residues: Peptide chain release factor 1 (360 aa).

Gln-235 is subject to N5-methylglutamine. A disordered region spans residues 284–313 (AKRQQAEASTRRNLLGSGDRSDRNRTYNFP).

It belongs to the prokaryotic/mitochondrial release factor family. Methylated by PrmC. Methylation increases the termination efficiency of RF1.

The protein resides in the cytoplasm. Peptide chain release factor 1 directs the termination of translation in response to the peptide chain termination codons UAG and UAA. The chain is Peptide chain release factor 1 from Salmonella agona (strain SL483).